The primary structure comprises 698 residues: MOXD1 homolog 1 (698 aa).

Residues 1-20 form the signal peptide; it reads MSVQDVLWIVLTVQLSFGLA. N-linked (GlcNAc...) asparagine glycosylation is found at Asn36, Asn140, and Asn221. In terms of domain architecture, DOMON spans 54-174; the sequence is GLYWLKWWIN…DTFKVLWSIG (121 aa). Tyr232 is an active-site residue. Cu cation-binding residues include His265 and His266. Cys272 and Cys309 are joined by a disulfide. Cu cation is bound by residues His347, His425, and His427. 2 disulfide bridges follow: Cys403–Cys516 and Cys479–Cys501. His425 is a catalytic residue. Asn465 carries N-linked (GlcNAc...) asparagine glycosylation. Met500 provides a ligand contact to Cu cation. Residues Asn538 and Asn561 are each glycosylated (N-linked (GlcNAc...) asparagine).

The protein belongs to the copper type II ascorbate-dependent monooxygenase family. The cofactor is Cu(2+).

It localises to the secreted. This Drosophila melanogaster (Fruit fly) protein is MOXD1 homolog 1.